A 304-amino-acid polypeptide reads, in one-letter code: GTP cyclohydrolase FolE2 (304 aa).

It belongs to the GTP cyclohydrolase IV family.

The enzyme catalyses GTP + H2O = 7,8-dihydroneopterin 3'-triphosphate + formate + H(+). It participates in cofactor biosynthesis; 7,8-dihydroneopterin triphosphate biosynthesis; 7,8-dihydroneopterin triphosphate from GTP: step 1/1. In terms of biological role, converts GTP to 7,8-dihydroneopterin triphosphate. The chain is GTP cyclohydrolase FolE2 from Hahella chejuensis (strain KCTC 2396).